We begin with the raw amino-acid sequence, 284 residues long: uncharacterized protein (284 aa).

Residues 12 to 32 (ILFILFVVAFCVYLVPRVAIN) form a helical membrane-spanning segment.

The protein belongs to the serine esterase family.

It localises to the membrane. This is an uncharacterized protein from Escherichia coli O157:H7.